The chain runs to 1829 residues: DNA polymerase (1829 aa).

DOD-type homing endonuclease domains follow at residues 527-668 (LSGI…SLGI) and 1136-1269 (FLGY…SLGV).

It belongs to the DNA polymerase type-B family. This protein undergoes a protein self splicing that involves a post-translational excision of the three intervening regions (inteins) followed by peptide ligation.

It catalyses the reaction DNA(n) + a 2'-deoxyribonucleoside 5'-triphosphate = DNA(n+1) + diphosphate. The chain is DNA polymerase (pol) from Thermococcus aggregans.